A 607-amino-acid chain; its full sequence is Polyadenylate-binding protein 1-like (607 aa).

4 consecutive RRM domains span residues 11–89 (SSLY…WSHR), 99–175 (GNIF…HFKS), 191–268 (TNIY…RAQK), and 294–370 (VNLY…LAQR). Residues 523-600 (HQPLTVSMLA…AVAVLQVHRE (78 aa)) form the PABC domain.

It belongs to the polyadenylate-binding protein type-1 family. As to expression, expressed in ovary and testis.

It localises to the cytoplasm. Functionally, poly(A)-binding protein involved in oocyte maturation and early embryo development. It is required for cytosolic mRNA polyadenylation and translational activation of maternally stored mRNA in oocytes. The protein is Polyadenylate-binding protein 1-like of Mus musculus (Mouse).